The primary structure comprises 300 residues: 17-beta-hydroxysteroid dehydrogenase 13 (300 aa).

Positions 1–19 are cleaved as a signal peptide; it reads MNLILELLLLVGIIIYSYL. Ser33 carries the post-translational modification Phosphoserine. Residue 40 to 67 participates in NAD(+) binding; that stretch reads LITGAGHGIGRLTAYEFAKQKSRLVLWD. Ser69 is subject to Phosphoserine. Residue Lys79 is modified to N6-acetyllysine. Ser172 provides a ligand contact to substrate. The active-site Proton acceptor is the Tyr185. NAD(+) is bound at residue Lys189.

This sequence belongs to the short-chain dehydrogenases/reductases (SDR) family.

The protein localises to the lipid droplet. It localises to the endoplasmic reticulum. The enzyme catalyses 17beta-estradiol + NAD(+) = estrone + NADH + H(+). The catalysed reaction is all-trans-retinol + NAD(+) = all-trans-retinal + NADH + H(+). It carries out the reaction all-trans-retinal + NAD(+) + H2O = all-trans-retinoate + NADH + 2 H(+). In terms of biological role, plays a pivotal role in hepatic lipid metabolism. In vitro, it catalyzes the oxidation of a variety of lipid substrates, including 17beta-estradiol, retinol, retinal, and leukotriene B4. This Rattus norvegicus (Rat) protein is 17-beta-hydroxysteroid dehydrogenase 13 (Hsd17b13).